An 812-amino-acid polypeptide reads, in one-letter code: Valine--tRNA ligase (812 aa).

The 'HIGH' region signature appears at Pro-46–His-56. The 'KMSKS' region signature appears at Lys-536–Ser-540. Lys-539 is a binding site for ATP.

This sequence belongs to the class-I aminoacyl-tRNA synthetase family. ValS type 2 subfamily. As to quaternary structure, monomer.

The protein localises to the cytoplasm. The catalysed reaction is tRNA(Val) + L-valine + ATP = L-valyl-tRNA(Val) + AMP + diphosphate. In terms of biological role, catalyzes the attachment of valine to tRNA(Val). As ValRS can inadvertently accommodate and process structurally similar amino acids such as threonine, to avoid such errors, it has a 'posttransfer' editing activity that hydrolyzes mischarged Thr-tRNA(Val) in a tRNA-dependent manner. This Rickettsia akari (strain Hartford) protein is Valine--tRNA ligase.